A 1273-amino-acid polypeptide reads, in one-letter code: Clustered mitochondria protein homolog (1273 aa).

Positions 344–599 (PANNADYSRM…NTYPLDVKFA (256 aa)) constitute a Clu domain. TPR repeat units follow at residues 981-1013 (SDQK…KEEV), 1022-1055 (AEKY…YERV), and 1151-1184 (ATLE…FTRE). 2 disordered regions span residues 1217-1242 (AEQA…KAEL) and 1254-1273 (IEGG…KGKK). Basic residues predominate over residues 1262-1273 (SKKKSSKKKGKK).

Belongs to the CLU family. In terms of assembly, may associate with the eukaryotic translation initiation factor 3 (eIF-3) complex.

It is found in the cytoplasm. Its function is as follows. mRNA-binding protein involved in proper cytoplasmic distribution of mitochondria. The protein is Clustered mitochondria protein homolog of Vanderwaltozyma polyspora (strain ATCC 22028 / DSM 70294 / BCRC 21397 / CBS 2163 / NBRC 10782 / NRRL Y-8283 / UCD 57-17) (Kluyveromyces polysporus).